A 714-amino-acid polypeptide reads, in one-letter code: Fatty acid oxidation complex subunit alpha (714 aa).

Residues 1-190 are enoyl-CoA hydratase; the sequence is MEMASAFTLN…KLGLVDDVVP (190 aa). The segment at 306-714 is 3-hydroxyacyl-CoA dehydrogenase; it reads APLNSVGILG…FWKTTATDLQ (409 aa).

In the N-terminal section; belongs to the enoyl-CoA hydratase/isomerase family. It in the central section; belongs to the 3-hydroxyacyl-CoA dehydrogenase family. As to quaternary structure, heterotetramer of two alpha chains (FadJ) and two beta chains (FadI).

Its subcellular location is the cytoplasm. The catalysed reaction is a (3S)-3-hydroxyacyl-CoA = a (2E)-enoyl-CoA + H2O. It carries out the reaction a 4-saturated-(3S)-3-hydroxyacyl-CoA = a (3E)-enoyl-CoA + H2O. It catalyses the reaction a (3S)-3-hydroxyacyl-CoA + NAD(+) = a 3-oxoacyl-CoA + NADH + H(+). The enzyme catalyses (3S)-3-hydroxybutanoyl-CoA = (3R)-3-hydroxybutanoyl-CoA. It functions in the pathway lipid metabolism; fatty acid beta-oxidation. Catalyzes the formation of a hydroxyacyl-CoA by addition of water on enoyl-CoA. Also exhibits 3-hydroxyacyl-CoA epimerase and 3-hydroxyacyl-CoA dehydrogenase activities. This chain is Fatty acid oxidation complex subunit alpha, found in Escherichia coli O45:K1 (strain S88 / ExPEC).